The primary structure comprises 214 residues: Probable nicotinate-nucleotide adenylyltransferase (214 aa).

The protein belongs to the NadD family.

It catalyses the reaction nicotinate beta-D-ribonucleotide + ATP + H(+) = deamido-NAD(+) + diphosphate. The protein operates within cofactor biosynthesis; NAD(+) biosynthesis; deamido-NAD(+) from nicotinate D-ribonucleotide: step 1/1. Functionally, catalyzes the reversible adenylation of nicotinate mononucleotide (NaMN) to nicotinic acid adenine dinucleotide (NaAD). This chain is Probable nicotinate-nucleotide adenylyltransferase, found in Mycolicibacterium vanbaalenii (strain DSM 7251 / JCM 13017 / BCRC 16820 / KCTC 9966 / NRRL B-24157 / PYR-1) (Mycobacterium vanbaalenii).